The sequence spans 102 residues: Large ribosomal subunit protein bL21 (102 aa).

It belongs to the bacterial ribosomal protein bL21 family. As to quaternary structure, part of the 50S ribosomal subunit. Contacts protein L20.

In terms of biological role, this protein binds to 23S rRNA in the presence of protein L20. This Pseudarthrobacter chlorophenolicus (strain ATCC 700700 / DSM 12829 / CIP 107037 / JCM 12360 / KCTC 9906 / NCIMB 13794 / A6) (Arthrobacter chlorophenolicus) protein is Large ribosomal subunit protein bL21.